The sequence spans 177 residues: Large ribosomal subunit protein uL6 (177 aa).

A disordered region spans residues 151–177 (LRPPEPYKGKGVRYAGENVRRKEGKKK).

This sequence belongs to the universal ribosomal protein uL6 family. In terms of assembly, part of the 50S ribosomal subunit.

In terms of biological role, this protein binds to the 23S rRNA, and is important in its secondary structure. It is located near the subunit interface in the base of the L7/L12 stalk, and near the tRNA binding site of the peptidyltransferase center. The polypeptide is Large ribosomal subunit protein uL6 (Phenylobacterium zucineum (strain HLK1)).